We begin with the raw amino-acid sequence, 195 residues long: Imidazoleglycerol-phosphate dehydratase (195 aa).

It belongs to the imidazoleglycerol-phosphate dehydratase family.

It is found in the cytoplasm. It catalyses the reaction D-erythro-1-(imidazol-4-yl)glycerol 3-phosphate = 3-(imidazol-4-yl)-2-oxopropyl phosphate + H2O. Its pathway is amino-acid biosynthesis; L-histidine biosynthesis; L-histidine from 5-phospho-alpha-D-ribose 1-diphosphate: step 6/9. The sequence is that of Imidazoleglycerol-phosphate dehydratase from Burkholderia vietnamiensis (strain G4 / LMG 22486) (Burkholderia cepacia (strain R1808)).